The primary structure comprises 359 residues: Protein LpfD (359 aa).

An N-terminal signal peptide occupies residues 1 to 24 (MLKKLIMFTGLLGGSVLFSGQALA).

This sequence belongs to the fimbrial protein family.

It is found in the fimbrium. The polypeptide is Protein LpfD (lpfD) (Salmonella typhimurium (strain LT2 / SGSC1412 / ATCC 700720)).